The sequence spans 343 residues: Uroporphyrinogen decarboxylase (343 aa).

Residues 23-27, D73, Y150, S205, and H322 contribute to the substrate site; that span reads RQAGR.

This sequence belongs to the uroporphyrinogen decarboxylase family. In terms of assembly, homodimer.

It localises to the cytoplasm. It catalyses the reaction uroporphyrinogen III + 4 H(+) = coproporphyrinogen III + 4 CO2. The protein operates within porphyrin-containing compound metabolism; protoporphyrin-IX biosynthesis; coproporphyrinogen-III from 5-aminolevulinate: step 4/4. Its function is as follows. Catalyzes the decarboxylation of four acetate groups of uroporphyrinogen-III to yield coproporphyrinogen-III. This is Uroporphyrinogen decarboxylase from Cereibacter sphaeroides (strain ATCC 17025 / ATH 2.4.3) (Rhodobacter sphaeroides).